The chain runs to 1342 residues: DNA-directed RNA polymerase subunit beta (1342 aa).

N6-acetyllysine occurs at positions 1022 and 1200.

The protein belongs to the RNA polymerase beta chain family. In terms of assembly, the RNAP catalytic core consists of 2 alpha, 1 beta, 1 beta' and 1 omega subunit. When a sigma factor is associated with the core the holoenzyme is formed, which can initiate transcription.

The enzyme catalyses RNA(n) + a ribonucleoside 5'-triphosphate = RNA(n+1) + diphosphate. In terms of biological role, DNA-dependent RNA polymerase catalyzes the transcription of DNA into RNA using the four ribonucleoside triphosphates as substrates. The sequence is that of DNA-directed RNA polymerase subunit beta from Escherichia coli O139:H28 (strain E24377A / ETEC).